The sequence spans 362 residues: Glutaminyl-peptide cyclotransferase (362 aa).

The signal sequence occupies residues 1–35 (MAGSEDKRVVGTLHLLLLQATVLSLTAGNLSLVSA). 2 N-linked (GlcNAc...) asparagine glycosylation sites follow: Asn29 and Asn50. Cys140 and Cys165 are joined by a disulfide. A Zn(2+)-binding site is contributed by Asp160. Glu202 functions as the Proton acceptor in the catalytic mechanism. Glu203 contacts Zn(2+). Asp249 functions as the Proton acceptor in the catalytic mechanism. His331 contacts Zn(2+).

The protein belongs to the glutaminyl-peptide cyclotransferase family.

It localises to the secreted. It carries out the reaction N-terminal L-glutaminyl-[peptide] = N-terminal 5-oxo-L-prolyl-[peptide] + NH4(+). Responsible for the biosynthesis of pyroglutamyl peptides. Has a bias against acidic and tryptophan residues adjacent to the N-terminal glutaminyl residue and a lack of importance of chain length after the second residue. This is Glutaminyl-peptide cyclotransferase (Qpct) from Mus musculus (Mouse).